Here is a 310-residue protein sequence, read N- to C-terminus: GMP synthase [glutamine-hydrolyzing] subunit B (310 aa).

The region spanning 2–185 (FKTEPFIEES…LGLPDQIAHR (184 aa)) is the GMPS ATP-PPase domain. 29–35 (SGGVDSS) serves as a coordination point for ATP.

Heterodimer composed of a glutamine amidotransferase subunit (A) and a GMP-binding subunit (B).

The catalysed reaction is XMP + L-glutamine + ATP + H2O = GMP + L-glutamate + AMP + diphosphate + 2 H(+). The protein operates within purine metabolism; GMP biosynthesis; GMP from XMP (L-Gln route): step 1/1. Catalyzes the synthesis of GMP from XMP. The protein is GMP synthase [glutamine-hydrolyzing] subunit B of Methanococcus maripaludis (strain C7 / ATCC BAA-1331).